The chain runs to 357 residues: UDP-N-acetylglucosamine--N-acetylmuramyl-(pentapeptide) pyrophosphoryl-undecaprenol N-acetylglucosamine transferase (357 aa).

UDP-N-acetyl-alpha-D-glucosamine is bound by residues 14–16 (TGG), Asn-126, Arg-162, Ser-190, Ile-246, 265–270 (ALTVCE), and Gln-290.

It belongs to the glycosyltransferase 28 family. MurG subfamily.

The protein resides in the cell inner membrane. It catalyses the reaction di-trans,octa-cis-undecaprenyl diphospho-N-acetyl-alpha-D-muramoyl-L-alanyl-D-glutamyl-meso-2,6-diaminopimeloyl-D-alanyl-D-alanine + UDP-N-acetyl-alpha-D-glucosamine = di-trans,octa-cis-undecaprenyl diphospho-[N-acetyl-alpha-D-glucosaminyl-(1-&gt;4)]-N-acetyl-alpha-D-muramoyl-L-alanyl-D-glutamyl-meso-2,6-diaminopimeloyl-D-alanyl-D-alanine + UDP + H(+). It functions in the pathway cell wall biogenesis; peptidoglycan biosynthesis. Functionally, cell wall formation. Catalyzes the transfer of a GlcNAc subunit on undecaprenyl-pyrophosphoryl-MurNAc-pentapeptide (lipid intermediate I) to form undecaprenyl-pyrophosphoryl-MurNAc-(pentapeptide)GlcNAc (lipid intermediate II). This Histophilus somni (strain 129Pt) (Haemophilus somnus) protein is UDP-N-acetylglucosamine--N-acetylmuramyl-(pentapeptide) pyrophosphoryl-undecaprenol N-acetylglucosamine transferase.